A 198-amino-acid chain; its full sequence is Glycerol-3-phosphate acyltransferase (198 aa).

5 helical membrane passes run 1–21 (MILI…IPAA), 52–72 (GPAL…VGLA), 81–101 (WTAL…FLGF), 115–135 (LALD…CIWL), and 153–173 (LAAA…LAAL).

The protein belongs to the PlsY family. As to quaternary structure, probably interacts with PlsX.

The protein localises to the cell membrane. The catalysed reaction is an acyl phosphate + sn-glycerol 3-phosphate = a 1-acyl-sn-glycero-3-phosphate + phosphate. It functions in the pathway lipid metabolism; phospholipid metabolism. Its function is as follows. Catalyzes the transfer of an acyl group from acyl-phosphate (acyl-PO(4)) to glycerol-3-phosphate (G3P) to form lysophosphatidic acid (LPA). This enzyme utilizes acyl-phosphate as fatty acyl donor, but not acyl-CoA or acyl-ACP. The polypeptide is Glycerol-3-phosphate acyltransferase (Deinococcus geothermalis (strain DSM 11300 / CIP 105573 / AG-3a)).